The chain runs to 315 residues: KH domain-containing protein At5g56140 (315 aa).

Disordered stretches follow at residues 1–53 (MMMM…GGLR) and 136–158 (SQFP…SPGS). Residues 7–28 (LGGGGGGGGGSGGGIGGGGGGR) are compositionally biased toward gly residues. Polar residues-rich tracts occupy residues 31–53 (TYSS…GGLR) and 136–146 (SQFPSERSVPS). A KH domain is found at 171-238 (DIPVDNYPNF…EHLNEPLHIL (68 aa)). Residues 289–315 (REEGSPMSGSVSPYNSLGMKRAKTREG) are disordered. Ser300 carries the post-translational modification Phosphoserine.

The protein resides in the nucleus. The polypeptide is KH domain-containing protein At5g56140 (Arabidopsis thaliana (Mouse-ear cress)).